The primary structure comprises 209 residues: Small ribosomal subunit protein uS4 (209 aa).

The region spanning 99–179 (GRLDSVAYRM…FPEWIEVDAK (81 aa)) is the S4 RNA-binding domain.

The protein belongs to the universal ribosomal protein uS4 family. In terms of assembly, part of the 30S ribosomal subunit. Contacts protein S5. The interaction surface between S4 and S5 is involved in control of translational fidelity.

Functionally, one of the primary rRNA binding proteins, it binds directly to 16S rRNA where it nucleates assembly of the body of the 30S subunit. Its function is as follows. With S5 and S12 plays an important role in translational accuracy. The protein is Small ribosomal subunit protein uS4 of Azoarcus sp. (strain BH72).